A 95-amino-acid chain; its full sequence is Aspartyl/glutamyl-tRNA(Asn/Gln) amidotransferase subunit C (95 aa).

The protein belongs to the GatC family. Heterotrimer of A, B and C subunits.

The catalysed reaction is L-glutamyl-tRNA(Gln) + L-glutamine + ATP + H2O = L-glutaminyl-tRNA(Gln) + L-glutamate + ADP + phosphate + H(+). The enzyme catalyses L-aspartyl-tRNA(Asn) + L-glutamine + ATP + H2O = L-asparaginyl-tRNA(Asn) + L-glutamate + ADP + phosphate + 2 H(+). In terms of biological role, allows the formation of correctly charged Asn-tRNA(Asn) or Gln-tRNA(Gln) through the transamidation of misacylated Asp-tRNA(Asn) or Glu-tRNA(Gln) in organisms which lack either or both of asparaginyl-tRNA or glutaminyl-tRNA synthetases. The reaction takes place in the presence of glutamine and ATP through an activated phospho-Asp-tRNA(Asn) or phospho-Glu-tRNA(Gln). The protein is Aspartyl/glutamyl-tRNA(Asn/Gln) amidotransferase subunit C of Geobacter sulfurreducens (strain ATCC 51573 / DSM 12127 / PCA).